The primary structure comprises 241 residues: MEFEQVLTEARLVRRYRRFLADVEDASGQQWTVHCPNTGSMLGCTEPGARVWLSHSTRPGRKYAQTWELVELPGEVVVGVHTGRANALVGEALDAGLLPELSGYASRRREVRVPDAPMRADWLLEGHPGGEPPCFVEVKNVTAAVEHGRALFPDAVTERGRRHLEVLTEWVRGGGRAALVFCVQRSDAQEVRPAEAIDPRYADALRAAAAEGVEIRAVRLHPSATGIRPDCALPVHYQEEP.

It belongs to the SfsA family.

The polypeptide is Sugar fermentation stimulation protein homolog (Halorhodospira halophila (strain DSM 244 / SL1) (Ectothiorhodospira halophila (strain DSM 244 / SL1))).